Consider the following 369-residue polypeptide: Phospho-N-acetylmuramoyl-pentapeptide-transferase (369 aa).

10 helical membrane-spanning segments follow: residues 2–22 (IALL…TPLF), 55–75 (TVVV…MWMM), 86–106 (GLLL…DDFI), 120–140 (AKLI…LQFP), 163–183 (LAFG…NLII), 196–216 (LDGL…IMGI), 239–259 (PMDL…FLWW), 266–286 (IFMG…FAIL), 291–311 (LLLA…IIQV), and 348–368 (ILAG…WVVL).

Belongs to the glycosyltransferase 4 family. MraY subfamily. Requires Mg(2+) as cofactor.

It is found in the cell membrane. It catalyses the reaction UDP-N-acetyl-alpha-D-muramoyl-L-alanyl-gamma-D-glutamyl-meso-2,6-diaminopimeloyl-D-alanyl-D-alanine + di-trans,octa-cis-undecaprenyl phosphate = di-trans,octa-cis-undecaprenyl diphospho-N-acetyl-alpha-D-muramoyl-L-alanyl-D-glutamyl-meso-2,6-diaminopimeloyl-D-alanyl-D-alanine + UMP. Its pathway is cell wall biogenesis; peptidoglycan biosynthesis. Functionally, catalyzes the initial step of the lipid cycle reactions in the biosynthesis of the cell wall peptidoglycan: transfers peptidoglycan precursor phospho-MurNAc-pentapeptide from UDP-MurNAc-pentapeptide onto the lipid carrier undecaprenyl phosphate, yielding undecaprenyl-pyrophosphoryl-MurNAc-pentapeptide, known as lipid I. The sequence is that of Phospho-N-acetylmuramoyl-pentapeptide-transferase from Paenarthrobacter aurescens (strain TC1).